We begin with the raw amino-acid sequence, 90 residues long: Probable Fe(2+)-trafficking protein (90 aa).

The protein belongs to the Fe(2+)-trafficking protein family.

Could be a mediator in iron transactions between iron acquisition and iron-requiring processes, such as synthesis and/or repair of Fe-S clusters in biosynthetic enzymes. The protein is Probable Fe(2+)-trafficking protein of Methylococcus capsulatus (strain ATCC 33009 / NCIMB 11132 / Bath).